We begin with the raw amino-acid sequence, 314 residues long: 1,4-dihydroxy-2-naphthoyl-CoA synthase (314 aa).

Substrate is bound by residues Arg58, 103 to 107 (SGGDQ), Tyr115, 157 to 161 (WAAGG), Thr184, Ser190, Tyr287, and Lys302.

This sequence belongs to the enoyl-CoA hydratase/isomerase family. MenB subfamily.

It catalyses the reaction 2-succinylbenzoyl-CoA + H(+) = 1,4-dihydroxy-2-naphthoyl-CoA + H2O. Its pathway is quinol/quinone metabolism; 1,4-dihydroxy-2-naphthoate biosynthesis; 1,4-dihydroxy-2-naphthoate from chorismate: step 6/7. The protein operates within quinol/quinone metabolism; menaquinone biosynthesis. Converts o-succinylbenzoyl-CoA (OSB-CoA) to 1,4-dihydroxy-2-naphthoyl-CoA (DHNA-CoA). The chain is 1,4-dihydroxy-2-naphthoyl-CoA synthase from Mycobacterium tuberculosis (strain CDC 1551 / Oshkosh).